The primary structure comprises 364 residues: Ribosomal RNA large subunit methyltransferase F (364 aa).

Over residues 1-17 (MPKPAIKTAAKPATSSA) the composition is skewed to low complexity. A disordered region spans residues 1-53 (MPKPAIKTAAKPATSSAGKRGKPITPKSVAKPQAAKPKTVSKPKVKPGEKKRL). The span at 39–53 (TVSKPKVKPGEKKRL) shows a compositional bias: basic residues.

This sequence belongs to the methyltransferase superfamily. METTL16/RlmF family.

It localises to the cytoplasm. The enzyme catalyses adenosine(1618) in 23S rRNA + S-adenosyl-L-methionine = N(6)-methyladenosine(1618) in 23S rRNA + S-adenosyl-L-homocysteine + H(+). Functionally, specifically methylates the adenine in position 1618 of 23S rRNA. This is Ribosomal RNA large subunit methyltransferase F from Shewanella sp. (strain MR-4).